The primary structure comprises 235 residues: Octanoyltransferase (235 aa).

The BPL/LPL catalytic domain occupies 30-214; the sequence is NELEDTLLLL…YFGKVFGAKF (185 aa). Substrate contacts are provided by residues 75-82, 144-146, and 157-159; these read RGGDVTYH, AIG, and GFA. Cys175 functions as the Acyl-thioester intermediate in the catalytic mechanism.

Belongs to the LipB family.

It is found in the cytoplasm. The enzyme catalyses octanoyl-[ACP] + L-lysyl-[protein] = N(6)-octanoyl-L-lysyl-[protein] + holo-[ACP] + H(+). It participates in protein modification; protein lipoylation via endogenous pathway; protein N(6)-(lipoyl)lysine from octanoyl-[acyl-carrier-protein]: step 1/2. Its function is as follows. Catalyzes the transfer of endogenously produced octanoic acid from octanoyl-acyl-carrier-protein onto the lipoyl domains of lipoate-dependent enzymes. Lipoyl-ACP can also act as a substrate although octanoyl-ACP is likely to be the physiological substrate. This chain is Octanoyltransferase, found in Caldicellulosiruptor saccharolyticus (strain ATCC 43494 / DSM 8903 / Tp8T 6331).